Consider the following 94-residue polypeptide: MLNVNEYFAGKVKSIGFEGDGIGRASVGVMDAGEYTFGTGQPEEMTVITGALKVLLPGAPDWQVFTPGETFFVPGKSEFNLQVVEPTSYLCKYL.

It belongs to the nucleoside phosphorylase PpnP family.

It carries out the reaction a purine D-ribonucleoside + phosphate = a purine nucleobase + alpha-D-ribose 1-phosphate. The catalysed reaction is adenosine + phosphate = alpha-D-ribose 1-phosphate + adenine. It catalyses the reaction cytidine + phosphate = cytosine + alpha-D-ribose 1-phosphate. The enzyme catalyses guanosine + phosphate = alpha-D-ribose 1-phosphate + guanine. It carries out the reaction inosine + phosphate = alpha-D-ribose 1-phosphate + hypoxanthine. The catalysed reaction is thymidine + phosphate = 2-deoxy-alpha-D-ribose 1-phosphate + thymine. It catalyses the reaction uridine + phosphate = alpha-D-ribose 1-phosphate + uracil. The enzyme catalyses xanthosine + phosphate = alpha-D-ribose 1-phosphate + xanthine. Catalyzes the phosphorolysis of diverse nucleosides, yielding D-ribose 1-phosphate and the respective free bases. Can use uridine, adenosine, guanosine, cytidine, thymidine, inosine and xanthosine as substrates. Also catalyzes the reverse reactions. The sequence is that of Pyrimidine/purine nucleoside phosphorylase from Pectobacterium carotovorum subsp. carotovorum (strain PC1).